Consider the following 446-residue polypeptide: 3-phosphoshikimate 1-carboxyvinyltransferase (446 aa).

The 3-phosphoshikimate site is built by K21, S22, and R26. Phosphoenolpyruvate is bound at residue K21. The phosphoenolpyruvate site is built by G92 and R120. 3-phosphoshikimate contacts are provided by S165, Q166, D308, and K335. Q166 lines the phosphoenolpyruvate pocket. Catalysis depends on D308, which acts as the Proton acceptor. Residues R339, R380, and K406 each coordinate phosphoenolpyruvate.

It belongs to the EPSP synthase family. Monomer.

The protein localises to the cytoplasm. It catalyses the reaction 3-phosphoshikimate + phosphoenolpyruvate = 5-O-(1-carboxyvinyl)-3-phosphoshikimate + phosphate. Its pathway is metabolic intermediate biosynthesis; chorismate biosynthesis; chorismate from D-erythrose 4-phosphate and phosphoenolpyruvate: step 6/7. Catalyzes the transfer of the enolpyruvyl moiety of phosphoenolpyruvate (PEP) to the 5-hydroxyl of shikimate-3-phosphate (S3P) to produce enolpyruvyl shikimate-3-phosphate and inorganic phosphate. In Chlamydia caviae (strain ATCC VR-813 / DSM 19441 / 03DC25 / GPIC) (Chlamydophila caviae), this protein is 3-phosphoshikimate 1-carboxyvinyltransferase.